We begin with the raw amino-acid sequence, 62 residues long: MIQISNLILAADVSPEVAGSSGFNMIASFFAAALLIVIPAAAFLIFVSQKDSLERTSATRRR.

A helical membrane pass occupies residues 26-46 (IASFFAAALLIVIPAAAFLIF).

This sequence belongs to the PsbX family. Type 2 subfamily. As to quaternary structure, PSII consists of a core antenna complex that captures photons, and an electron transfer chain that converts photonic excitation into a charge separation. PSII forms dimeric complexes.

It localises to the cellular thylakoid membrane. Functionally, involved in the binding and/or turnover of quinones at the Q(B) site of Photosystem II. This Prochlorococcus marinus subsp. pastoris (strain CCMP1986 / NIES-2087 / MED4) protein is Photosystem II reaction center X protein.